Reading from the N-terminus, the 137-residue chain is uncharacterized protein (137 aa).

Positions 116–137 (ARPPRGSGGTRTARNGARTASE) are disordered. A compositionally biased stretch (polar residues) spans 125-137 (TRTARNGARTASE).

This is an uncharacterized protein from Mycobacterium bovis (strain ATCC BAA-935 / AF2122/97).